A 502-amino-acid chain; its full sequence is ATP synthase subunit alpha (502 aa).

169–176 (GDRQTGKT) contacts ATP.

Belongs to the ATPase alpha/beta chains family. In terms of assembly, F-type ATPases have 2 components, CF(1) - the catalytic core - and CF(0) - the membrane proton channel. CF(1) has five subunits: alpha(3), beta(3), gamma(1), delta(1), epsilon(1). CF(0) has three main subunits: a(1), b(2) and c(9-12). The alpha and beta chains form an alternating ring which encloses part of the gamma chain. CF(1) is attached to CF(0) by a central stalk formed by the gamma and epsilon chains, while a peripheral stalk is formed by the delta and b chains.

It is found in the cell membrane. It carries out the reaction ATP + H2O + 4 H(+)(in) = ADP + phosphate + 5 H(+)(out). In terms of biological role, produces ATP from ADP in the presence of a proton gradient across the membrane. The alpha chain is a regulatory subunit. The protein is ATP synthase subunit alpha of Bacillus pumilus (strain SAFR-032).